Here is a 505-residue protein sequence, read N- to C-terminus: 2,3-bisphosphoglycerate-independent phosphoglycerate mutase (505 aa).

Mn(2+) is bound by residues Asp12 and Ser62. The active-site Phosphoserine intermediate is the Ser62. Substrate contacts are provided by residues His123, 153-154 (RD), Arg185, Arg191, 257-260 (RPDR), and Lys330. Mn(2+) is bound by residues Asp397, His401, Asp438, His439, and His456.

It belongs to the BPG-independent phosphoglycerate mutase family. In terms of assembly, monomer. It depends on Mn(2+) as a cofactor.

It catalyses the reaction (2R)-2-phosphoglycerate = (2R)-3-phosphoglycerate. The protein operates within carbohydrate degradation; glycolysis; pyruvate from D-glyceraldehyde 3-phosphate: step 3/5. Catalyzes the interconversion of 2-phosphoglycerate and 3-phosphoglycerate. This is 2,3-bisphosphoglycerate-independent phosphoglycerate mutase from Staphylococcus haemolyticus (strain JCSC1435).